The primary structure comprises 306 residues: Ornithine carbamoyltransferase (306 aa).

Residues 51–54 (STRT), Q78, R102, and 129–132 (HPVQ) contribute to the carbamoyl phosphate site. Residues N157, D221, and 225 to 226 (SM) contribute to the L-ornithine site. Carbamoyl phosphate contacts are provided by residues 261 to 262 (CL) and R289.

Belongs to the aspartate/ornithine carbamoyltransferase superfamily. OTCase family.

The protein localises to the cytoplasm. The enzyme catalyses carbamoyl phosphate + L-ornithine = L-citrulline + phosphate + H(+). The protein operates within amino-acid biosynthesis; L-arginine biosynthesis; L-arginine from L-ornithine and carbamoyl phosphate: step 1/3. In terms of biological role, reversibly catalyzes the transfer of the carbamoyl group from carbamoyl phosphate (CP) to the N(epsilon) atom of ornithine (ORN) to produce L-citrulline. This is Ornithine carbamoyltransferase from Campylobacter hominis (strain ATCC BAA-381 / DSM 21671 / CCUG 45161 / LMG 19568 / NCTC 13146 / CH001A).